The sequence spans 436 residues: Transcription factor Sox-10 (436 aa).

Disordered stretches follow at residues 1–55, 145–183, 195–257, 322–346, and 413–436; these read MSDD…ERFP, RLRM…AEGG, HLDH…DFGN, PQTD…QPST, and SPSV…LSRP. K44 participates in a covalent cross-link: Glycyl lysine isopeptide (Lys-Gly) (interchain with G-Cter in SUMO). The dimerization (DIM) stretch occupies residues 48-88; it reads DSEDERFPVCIREAVSQVLSGYDWTLVPMPVRVNGGSKSKP. The HMG box DNA-binding region spans 90 to 158; it reads VKRPMNAFMV…QHKKDHPDYK (69 aa). The span at 145–159 shows a compositional bias: basic and acidic residues; it reads RLRMQHKKDHPDYKY. 2 stretches are compositionally biased toward polar residues: residues 205–215 and 331–346; these read SDGNSEHSAGQ and KTES…QPST. Residues 209 to 295 are transactivation domain (TAM); the sequence is SEHSAGQSHG…NGHAGHPSHI (87 aa). The tract at residues 327-436 is transactivation domain (TAC); that stretch reads KAQVKTESSS…QPVYTTLSRP (110 aa). A Glycyl lysine isopeptide (Lys-Gly) (interchain with G-Cter in SUMO) cross-link involves residue K331.

As to quaternary structure, interacts with the sumoylation factors ube2i/ubc9 and sumo1. Sumoylated.

It localises to the cytoplasm. The protein resides in the nucleus. In terms of biological role, acts early in neural crest formation, functioning redundantly with the other group E Sox factors sox8 and sox9 to induce neural crest progenitors. Acts downstream of wnt-signaling at the neural plate border. Involved in the specification of neural crest progenitors fated to form the pigment cell lineage. In Xenopus tropicalis (Western clawed frog), this protein is Transcription factor Sox-10.